A 1499-amino-acid chain; its full sequence is Ring canal kelch homolog (1499 aa).

Polar residues predominate over residues 56–66; sequence LDESSQKQLPR. The disordered stretch occupies residues 56 to 75; that stretch reads LDESSQKQLPRSNGKEKTTG. In terms of domain architecture, BTB spans 100–166; it reads CDVVLVAEGI…VYRAVVEVTE (67 aa). Kelch repeat units lie at residues 351 to 396, 397 to 443, 444 to 490, 492 to 539, 541 to 586, and 588 to 634; these read VLLV…VLGD, KVYA…VLNN, CIYA…VVNG, LYAV…VLDN, LYAV…AHNG, and LYVV…MIDK. Sec637 is a non-standard amino acid (selenocysteine). 8 disordered regions span residues 679-714, 750-786, 825-856, 984-1017, 1033-1085, 1107-1160, 1301-1321, and 1334-1499; these read AGQA…GNNV, LQYA…GGGG, AGYD…CPNL, NQSN…SSSV, SMNN…GNGG, ASTS…PVDV, QVGR…PLRT, and ARSP…TASE. A compositionally biased stretch (low complexity) spans 698-713; it reads NPEPANSNNSAPNGNN. The span at 776–786 shows a compositional bias: gly residues; that stretch reads GERGAVGGGGG. The span at 986-1003 shows a compositional bias: low complexity; it reads SNSSSASSASPYGANGPA. Residues 1004–1017 show a composition bias toward polar residues; that stretch reads TTSQPNPTKDSSSV. Low complexity predominate over residues 1040-1054; the sequence is SSAAHGTASGSAPAA. A compositionally biased stretch (gly residues) spans 1065-1085; that stretch reads ISGGASGGGAGGAGSSGGNGG. Residues 1107–1119 show a composition bias toward low complexity; sequence ASTSTTLGGKSTG. Polar residues predominate over residues 1135-1147; sequence GPSDPTAGTSAPQ. Residues 1348-1359 show a composition bias toward basic and acidic residues; the sequence is NREKPREVRRIT. The segment covering 1401 to 1410 has biased composition (low complexity); it reads SSASSSSDSD. The span at 1460–1471 shows a compositional bias: polar residues; sequence VGSSSNETSDSL.

Its subcellular location is the cytoplasm. The protein localises to the cytoskeleton. Its function is as follows. May play a role in organizing the actin cytoskeleton. The polypeptide is Ring canal kelch homolog (Anopheles stephensi (Indo-Pakistan malaria mosquito)).